A 307-amino-acid polypeptide reads, in one-letter code: B3 domain-containing protein At5g18000 (307 aa).

The TF-B3 1 DNA-binding region spans 20–115; the sequence is FFKILRREDH…CFNVTIFEAD (96 aa). Disordered stretches follow at residues 122–141 and 151–209; these read PRKT…RKSI and IESW…SEAG. The span at 166 to 177 shows a compositional bias: polar residues; the sequence is ESTSGRLTQKQE. A compositionally biased stretch (basic and acidic residues) spans 178-192; it reads LNLRKKEADKTEKSK. A DNA-binding region (TF-B3 2) is located at residues 214 to 307; sequence IPEFKLTIKK…TEMRVKVSKE (94 aa).

It is found in the nucleus. This is B3 domain-containing protein At5g18000 from Arabidopsis thaliana (Mouse-ear cress).